The following is a 330-amino-acid chain: Low affinity immunoglobulin gamma Fc region receptor II (330 aa).

A signal peptide spans 1 to 29 (MESNWTVHVFSRTLCHMLLWTAVLNLAAG). At 30-210 (THDLPKAVVK…QGPKSSRSLP (181 aa)) the chain is on the extracellular side. 2 consecutive Ig-like C2-type domains span residues 50-106 (EDTV…QTRL) and 131-189 (GETI…LGRT). Intrachain disulfides connect Cys57–Cys99 and Cys138–Cys182. 4 N-linked (GlcNAc...) asparagine glycosylation sites follow: Asn65, Asn92, Asn166, and Asn173. A helical membrane pass occupies residues 211-231 (VLTIVAAVTGIAVAAIVIILV). The Cytoplasmic segment spans residues 232–330 (SLVYLKKKQV…ETEHDYQNHI (99 aa)). Residues 261–330 (VGEYRQPSGG…ETEHDYQNHI (70 aa)) form a disordered region. Tyr290 bears the Phosphotyrosine mark. The short motif at 307-312 (ITYSLL) is the ITIM motif element. Tyr309 carries the post-translational modification Phosphotyrosine; by SRC-type Tyr-kinases. Tyr326 bears the Phosphotyrosine mark.

In terms of assembly, interacts with FGR. Interacts with LYN. In terms of processing, glycosylated. Post-translationally, when coaggregated to BCR, isoform IIB1 and isoform IIB1' become tyrosine phosphorylated and bind to the SH2 domains of the protein tyrosine phosphatase PTPC1. Phosphorylated by SRC-type Tyr-kinases such as LYN, BLK, FYN and SYK. As to expression, widely expressed by cells of hemopoietic origin. The isoforms are differentially expressed. Isoform IIB1 is preferentially expressed by cells of the lymphoid lineage, isoform IIB2 by cells of the myeloid lineage, and isoform IIB3 is released by macrophages and is present in the serum. Isoform IIB1' is expressed in myeloid and lymphoid cell lines, in normal spleen cells, and in resting or LPS-activated B-cells but is not detected in mesenteric lymph node cells.

It is found in the cell membrane. It localises to the cytoplasm. The protein resides in the cytoskeleton. Its subcellular location is the secreted. Its function is as follows. Receptor for the Fc region of complexed immunoglobulins gamma. Low affinity receptor. Involved in a variety of effector and regulatory functions such as phagocytosis of antigen-antibody complexes from the circulation and modulation of antibody production by B-cells. Isoform IIB1 and isoform IIB1' form caps but fail to mediate endocytosis or phagocytosis. Isoform IIB2 can mediate the endocytosis of soluble immune complexes via clathrin-coated pits. Isoform IIB1 and isoform IIB2 can down-regulate B-cell, T-cell, and mast cell activation when coaggregated to B-cell receptors for AG (BCR), T-cell receptors for AG (TCR), and Fc receptors, respectively. The protein is Low affinity immunoglobulin gamma Fc region receptor II (Fcgr2) of Mus musculus (Mouse).